Reading from the N-terminus, the 172-residue chain is Large ribosomal subunit protein uL10 (172 aa).

This sequence belongs to the universal ribosomal protein uL10 family. In terms of assembly, part of the ribosomal stalk of the 50S ribosomal subunit. The N-terminus interacts with L11 and the large rRNA to form the base of the stalk. The C-terminus forms an elongated spine to which L12 dimers bind in a sequential fashion forming a multimeric L10(L12)X complex.

In terms of biological role, forms part of the ribosomal stalk, playing a central role in the interaction of the ribosome with GTP-bound translation factors. The chain is Large ribosomal subunit protein uL10 from Ruegeria sp. (strain TM1040) (Silicibacter sp.).